The sequence spans 122 residues: Small ribosomal subunit protein uS13 (122 aa).

Residues 99 to 122 (RGQRTHTNARTRKGPAKAIAGKKK) form a disordered region.

It belongs to the universal ribosomal protein uS13 family. As to quaternary structure, part of the 30S ribosomal subunit. Forms a loose heterodimer with protein S19. Forms two bridges to the 50S subunit in the 70S ribosome.

In terms of biological role, located at the top of the head of the 30S subunit, it contacts several helices of the 16S rRNA. In the 70S ribosome it contacts the 23S rRNA (bridge B1a) and protein L5 of the 50S subunit (bridge B1b), connecting the 2 subunits; these bridges are implicated in subunit movement. Contacts the tRNAs in the A and P-sites. In Bradyrhizobium sp. (strain ORS 278), this protein is Small ribosomal subunit protein uS13.